We begin with the raw amino-acid sequence, 377 residues long: MTTRLYLSPTPPRNDREGASKSTSASIKHDAYLPPADGNRVLVDRFGRIARDLRVSLTDRCNLRCTYCMPAEGLEWLPTEQTLNDAEVLRLIRIAVVKLGIRQIRFTGGEPLLRKNLEDIIAGTAALRTDEGEKVHIALTTNGLGLDKRIAGLKEAGLDRVNISLDTIDAERYVSLTRRDRLSGVLASIDAAVAAGLHPVKINAVVMPGVNEVDIVPLAEYCISKGSQLRFIEQMPLGPREQWKRGDMVTAEEILARLEEKFTLSPAKEPRGAAPAALWNVVDKSNPDITGQIGIIASVTHPFCGDCDRSRLTTDGTIRNCLFSRTETPLRDALRDGASDDELAQLWAGAMWEKKPGHGIDDEGFLQPDRPMSAIGG.

The disordered stretch occupies residues 1-29; that stretch reads MTTRLYLSPTPPRNDREGASKSTSASIKH. The region spanning 45–271 is the Radical SAM core domain; it reads RFGRIARDLR…FTLSPAKEPR (227 aa). Residue Arg54 coordinates GTP. [4Fe-4S] cluster contacts are provided by Cys61 and Cys65. Tyr67 serves as a coordination point for S-adenosyl-L-methionine. Cys68 is a [4Fe-4S] cluster binding site. Arg105 is a binding site for GTP. Gly109 contacts S-adenosyl-L-methionine. Thr140 serves as a coordination point for GTP. Ser164 serves as a coordination point for S-adenosyl-L-methionine. Lys201 contacts GTP. An S-adenosyl-L-methionine-binding site is contributed by Met235. Residues Cys304 and Cys307 each contribute to the [4Fe-4S] cluster site. Position 309 to 311 (309 to 311) interacts with GTP; the sequence is RSR. Position 321 (Cys321) interacts with [4Fe-4S] cluster.

It belongs to the radical SAM superfamily. MoaA family. As to quaternary structure, monomer and homodimer. [4Fe-4S] cluster serves as cofactor.

The catalysed reaction is GTP + AH2 + S-adenosyl-L-methionine = (8S)-3',8-cyclo-7,8-dihydroguanosine 5'-triphosphate + 5'-deoxyadenosine + L-methionine + A + H(+). The protein operates within cofactor biosynthesis; molybdopterin biosynthesis. Catalyzes the cyclization of GTP to (8S)-3',8-cyclo-7,8-dihydroguanosine 5'-triphosphate. The polypeptide is GTP 3',8-cyclase (Corynebacterium glutamicum (strain ATCC 13032 / DSM 20300 / JCM 1318 / BCRC 11384 / CCUG 27702 / LMG 3730 / NBRC 12168 / NCIMB 10025 / NRRL B-2784 / 534)).